Here is a 1108-residue protein sequence, read N- to C-terminus: TBC1 domain family member 8B (1108 aa).

2 consecutive GRAM domains span residues 143 to 210 (LRFE…ERTS) and 283 to 351 (QSFR…ELPD). Residues 469-656 (GVPETLRGEL…NVVDCFFYDG (188 aa)) form the Rab-GAP TBC domain. The 36-residue stretch at 822–857 (HSRSLARSAFHLLDENGDGLVNFKEFICGLDILYNR) folds into the EF-hand domain. Positions 835, 837, 839, and 846 each coordinate Ca(2+). Residues 961-1059 (GRKLQDSSPQ…PTDTPSSPCT (99 aa)) form a disordered region. Low complexity predominate over residues 967–998 (SSPQKTPQTTPTSTSQPESSPTKPTSPESETP). A compositionally biased stretch (polar residues) spans 1010–1024 (SPVSQHETAPSHSDI). Residues 1025–1057 (TPNSTSHPSTPTSSPTETSSPVLDTPTDTPSSP) are compositionally biased toward low complexity.

Its subcellular location is the cytoplasm. It is found in the cytosol. Functionally, involved in vesicular recycling, probably as a GTPase-activating protein for Rab family protein(s). The protein is TBC1 domain family member 8B (tbc1d8b) of Danio rerio (Zebrafish).